The primary structure comprises 403 residues: MASLPCIPSNFKPGSPPRGLPLACKAFGAGASLAAQERWLMPWRDGGLGFSLLLVLAGTRTAEVEGISAAGATSAARRFTAVADAELLLKGPDRPRLCSLPPLPAGISPALISYVAARWIGVDPLVAAVGLTLSPPFPHLRLEVPGMGPAACLSTGEAMGLSRVHALWQRGFCLGRGLRRPLVLAECVPGGTTTAQAVLTGLGLQVADLISGSARQAPMILKQELVDRGLSKAALGFNPPPQRVIAALGDPFQPVAVGLLLGAREAGQPVMLGGGSQMVAVLALALAAMEPSHRQDMVDGIVLGTTSWLAEEAKRSDGRPGALECLIDCVGEFFGVRLLGLATGLRFNNSQHRALQDYELGYVKEGVGAGALALLAQLQGASCEQLLEACDQAMNQLLGTSYS.

It belongs to the UPF0284 family.

The sequence is that of UPF0284 protein PMT_1350 from Prochlorococcus marinus (strain MIT 9313).